A 125-amino-acid chain; its full sequence is Ribosome-binding factor A (125 aa).

The protein belongs to the RbfA family. Monomer. Binds 30S ribosomal subunits, but not 50S ribosomal subunits or 70S ribosomes.

It localises to the cytoplasm. Functionally, one of several proteins that assist in the late maturation steps of the functional core of the 30S ribosomal subunit. Associates with free 30S ribosomal subunits (but not with 30S subunits that are part of 70S ribosomes or polysomes). Required for efficient processing of 16S rRNA. May interact with the 5'-terminal helix region of 16S rRNA. The chain is Ribosome-binding factor A from Paracidovorax citrulli (strain AAC00-1) (Acidovorax citrulli).